The following is a 193-amino-acid chain: Putative protein-glutamate methylesterase/protein-glutamine glutaminase (193 aa).

A CheB-type methylesterase domain is found at 1–179; sequence MNYEAIVIGV…DYVLSLEKIA (179 aa). Active-site residues include S11, H38, and D131.

The protein belongs to the CheB family.

The protein localises to the cytoplasm. The enzyme catalyses [protein]-L-glutamate 5-O-methyl ester + H2O = L-glutamyl-[protein] + methanol + H(+). The catalysed reaction is L-glutaminyl-[protein] + H2O = L-glutamyl-[protein] + NH4(+). Its function is as follows. May be involved in chemotaxis. This is Putative protein-glutamate methylesterase/protein-glutamine glutaminase (cheB2) from Leptospira interrogans serogroup Icterohaemorrhagiae serovar copenhageni (strain Fiocruz L1-130).